Here is a 273-residue protein sequence, read N- to C-terminus: Patr class II histocompatibility antigen, DO beta chain (273 aa).

A signal peptide spans 1–26; the sequence is MGSGWVPWVVALLVNLTRLDSSMTQG. Residues 27–120 form a beta-1 region; it reads TDSPEDFVIQ…LGAPFTVGRK (94 aa). Over 27-224 the chain is Extracellular; the sequence is TDSPEDFVIQ…RAQSEYSWKK (198 aa). Intrachain disulfides connect C41–C105 and C143–C199. N45 carries N-linked (GlcNAc...) asparagine glycosylation. Residues 121–214 are beta-2; that stretch reads VQPEVTVYPE…SLLSPVSVEW (94 aa). The 91-residue stretch at 123–213 folds into the Ig-like C1-type domain; it reads PEVTVYPERT…SSLLSPVSVE (91 aa). Residues 215 to 224 are connecting peptide; that stretch reads RAQSEYSWKK. Residues 225–245 form a helical membrane-spanning segment; that stretch reads MLSGIAAFLLGLIFLLVGIVI. Topologically, residues 246-273 are cytoplasmic; sequence QLRAQKGYVRTQMSGNEVSRAVLLPQSC.

Belongs to the MHC class II family. In terms of assembly, heterodimer of an alpha chain (DOA) and a beta chain (DOB). Forms a heterotetrameric complex with an HLA-DM molecule during intracellular transport in endosomal/lysosomal compartments in B-cells.

It localises to the endosome membrane. Its subcellular location is the lysosome membrane. Its function is as follows. Important modulator in the HLA class II restricted antigen presentation pathway by interaction with the HLA-DM molecule in B-cells. Modifies peptide exchange activity of HLA-DM. This is Patr class II histocompatibility antigen, DO beta chain (Patr-DOB) from Pan troglodytes (Chimpanzee).